Consider the following 688-residue polypeptide: Translation initiation factor IF-2 (688 aa).

Composition is skewed to basic and acidic residues over residues 53-62 (GKEKSEKTKE) and 86-95 (KRDDKNEKVN). A disordered region spans residues 53-100 (GKEKSEKTKEEDDEIETTAKNPIKESMNNKKSNKRDDKNEKVNTENAE). The tr-type G domain maps to 187–354 (KRSPIITVMG…MILLSSEILE (168 aa)). A G1 region spans residues 196–203 (GHVDHGKT). 196-203 (GHVDHGKT) contacts GTP. The tract at residues 221-225 (GITQH) is G2. The interval 242–245 (DTPG) is G3. GTP-binding positions include 242-246 (DTPGH) and 296-299 (NKID). Residues 296 to 299 (NKID) are G4. The segment at 332 to 334 (SAH) is G5.

Belongs to the TRAFAC class translation factor GTPase superfamily. Classic translation factor GTPase family. IF-2 subfamily.

Its subcellular location is the cytoplasm. Its function is as follows. One of the essential components for the initiation of protein synthesis. Protects formylmethionyl-tRNA from spontaneous hydrolysis and promotes its binding to the 30S ribosomal subunits. Also involved in the hydrolysis of GTP during the formation of the 70S ribosomal complex. This Clostridium botulinum (strain Loch Maree / Type A3) protein is Translation initiation factor IF-2.